The sequence spans 481 residues: Phloretin 4'-O-glucosyltransferase (481 aa).

The Proton acceptor role is filled by histidine 16. Histidine 16 provides a ligand contact to an anthocyanidin. UDP-alpha-D-glucose contacts are provided by glutamine 354, histidine 369, tryptophan 372, asparagine 373, serine 374, glutamate 377, aspartate 393, and glutamine 394.

This sequence belongs to the UDP-glycosyltransferase family. In terms of tissue distribution, highly expressed in young leaves, at intermediate level in mature leaves and at low levels in flowers and fruits.

The enzyme catalyses phloretin + UDP-alpha-D-glucose = trilobatin + UDP + H(+). It carries out the reaction (2S)-naringenin + UDP-alpha-D-glucose = (2S)-naringenin 7-O-beta-D-glucoside + UDP + H(+). Functionally, glycosyltransferase that possesses phloretin 4'-O-glycosyltransferase activity. Converts phloretin to trilobatin (phloretin 4'-O-glucoside), a potential antioxidant. Can convert with low efficiency phlorizin and trilobatin to their corresponding di-O-glucosides. Can convert with low efficiency naringenin to naringenin-7-O-glucoside. Can convert with low efficiency quercetin to quercetin-7-O-glucoside. The chain is Phloretin 4'-O-glucosyltransferase from Malus domestica (Apple).